The following is a 256-amino-acid chain: BI1-like protein (256 aa).

A run of 7 helical transmembrane segments spans residues 53–73 (VYGI…VVVL), 85–105 (PGIL…LHIY), 113–133 (LILL…SCAM), 138–158 (IVLQ…AYTF), 167–187 (FSFL…TSFI), 189–209 (MFFP…ALVF), and 228–248 (EYIL…LTIL).

The protein belongs to the BI1 family.

It localises to the membrane. This is BI1-like protein from Arabidopsis thaliana (Mouse-ear cress).